Reading from the N-terminus, the 182-residue chain is MIKAPNIILVGPMGAGKTTIGRLISQSMGKEFYDLDKVIEDNAGADIPWIFEREGEDGFRKRETQALASIVESDTGDCVLATGGGIVMREENRDILRENALVVYLYASVAQQLYRTSKSTHRPLLQTGDPRATLKKLFEIRDPLYRDVATLVIETDSRHPRSVANKVLDAIKRHLKMEITVS.

An ATP-binding site is contributed by 14 to 19 (GAGKTT). Thr-18 provides a ligand contact to Mg(2+). Asp-36, Arg-60, and Gly-84 together coordinate substrate. Residue Arg-122 coordinates ATP. Position 141 (Arg-141) interacts with substrate.

Belongs to the shikimate kinase family. As to quaternary structure, monomer. Mg(2+) is required as a cofactor.

The protein resides in the cytoplasm. The catalysed reaction is shikimate + ATP = 3-phosphoshikimate + ADP + H(+). The protein operates within metabolic intermediate biosynthesis; chorismate biosynthesis; chorismate from D-erythrose 4-phosphate and phosphoenolpyruvate: step 5/7. In terms of biological role, catalyzes the specific phosphorylation of the 3-hydroxyl group of shikimic acid using ATP as a cosubstrate. The protein is Shikimate kinase of Marinomonas sp. (strain MWYL1).